A 264-amino-acid chain; its full sequence is Thymidylate synthase (264 aa).

Arg21 is a binding site for dUMP. His51 contacts (6R)-5,10-methylene-5,6,7,8-tetrahydrofolate. 126 to 127 (RR) provides a ligand contact to dUMP. Cys146 functions as the Nucleophile in the catalytic mechanism. DUMP is bound by residues 166-169 (RSAD), Asn177, and 207-209 (HLY). Asp169 lines the (6R)-5,10-methylene-5,6,7,8-tetrahydrofolate pocket. Ala263 is a (6R)-5,10-methylene-5,6,7,8-tetrahydrofolate binding site.

Belongs to the thymidylate synthase family. Bacterial-type ThyA subfamily. As to quaternary structure, homodimer.

It localises to the cytoplasm. It carries out the reaction dUMP + (6R)-5,10-methylene-5,6,7,8-tetrahydrofolate = 7,8-dihydrofolate + dTMP. The protein operates within pyrimidine metabolism; dTTP biosynthesis. Catalyzes the reductive methylation of 2'-deoxyuridine-5'-monophosphate (dUMP) to 2'-deoxythymidine-5'-monophosphate (dTMP) while utilizing 5,10-methylenetetrahydrofolate (mTHF) as the methyl donor and reductant in the reaction, yielding dihydrofolate (DHF) as a by-product. This enzymatic reaction provides an intracellular de novo source of dTMP, an essential precursor for DNA biosynthesis. The chain is Thymidylate synthase from Methylobacterium nodulans (strain LMG 21967 / CNCM I-2342 / ORS 2060).